A 184-amino-acid polypeptide reads, in one-letter code: MKVIAVTGYKPFELGIFKNDHPGVECIKKALHRKLITFVEDGLEWVIISGQLGVELWAAEVVFEMQVEYPDLKLAVFTPFLEQEENWKEDNREYYEFILSQADHVDSITKRKYESPEQFKLKNQFFIEKSDALLAVYDEEKPGSPKYIVESAKKKGEIENYHSYFILFSDLQDIIEEEQWNNAE.

Belongs to the UPF0398 family.

The sequence is that of UPF0398 protein BC_1561 from Bacillus cereus (strain ATCC 14579 / DSM 31 / CCUG 7414 / JCM 2152 / NBRC 15305 / NCIMB 9373 / NCTC 2599 / NRRL B-3711).